A 338-amino-acid chain; its full sequence is Ferrochelatase (338 aa).

His-189 and Glu-294 together coordinate Fe cation.

The protein belongs to the ferrochelatase family.

It localises to the cytoplasm. The catalysed reaction is heme b + 2 H(+) = protoporphyrin IX + Fe(2+). Its pathway is porphyrin-containing compound metabolism; protoheme biosynthesis; protoheme from protoporphyrin-IX: step 1/1. Functionally, catalyzes the ferrous insertion into protoporphyrin IX. This is Ferrochelatase from Pseudomonas putida (strain ATCC 700007 / DSM 6899 / JCM 31910 / BCRC 17059 / LMG 24140 / F1).